We begin with the raw amino-acid sequence, 297 residues long: 4-diphosphocytidyl-2-C-methyl-D-erythritol kinase (297 aa).

K6 is a catalytic residue. 94-104 (PVAGGMAGGSA) provides a ligand contact to ATP. D136 is an active-site residue.

The protein belongs to the GHMP kinase family. IspE subfamily.

The enzyme catalyses 4-CDP-2-C-methyl-D-erythritol + ATP = 4-CDP-2-C-methyl-D-erythritol 2-phosphate + ADP + H(+). The protein operates within isoprenoid biosynthesis; isopentenyl diphosphate biosynthesis via DXP pathway; isopentenyl diphosphate from 1-deoxy-D-xylulose 5-phosphate: step 3/6. Catalyzes the phosphorylation of the position 2 hydroxy group of 4-diphosphocytidyl-2C-methyl-D-erythritol. This Nocardioides sp. (strain ATCC BAA-499 / JS614) protein is 4-diphosphocytidyl-2-C-methyl-D-erythritol kinase.